The chain runs to 711 residues: Polyribonucleotide nucleotidyltransferase (711 aa).

The Mg(2+) site is built by Asp490 and Asp496. The 60-residue stretch at 557 to 616 folds into the KH domain; the sequence is PRIETMQIPTDKIREVIGSGGKVIREIVETSGAKVDINDDGIIKIASANGEAIKKAYEMI. Residues 626–694 form the S1 motif domain; it reads GKVYTGTVVK…DRGKVRLSMK (69 aa).

It belongs to the polyribonucleotide nucleotidyltransferase family. The cofactor is Mg(2+).

It localises to the cytoplasm. The enzyme catalyses RNA(n+1) + phosphate = RNA(n) + a ribonucleoside 5'-diphosphate. In terms of biological role, involved in mRNA degradation. Catalyzes the phosphorolysis of single-stranded polyribonucleotides processively in the 3'- to 5'-direction. The protein is Polyribonucleotide nucleotidyltransferase of Dinoroseobacter shibae (strain DSM 16493 / NCIMB 14021 / DFL 12).